A 222-amino-acid chain; its full sequence is Deoxyribose-phosphate aldolase (222 aa).

The active-site Proton donor/acceptor is the Asp93. The active-site Schiff-base intermediate with acetaldehyde is the Lys156. Catalysis depends on Lys186, which acts as the Proton donor/acceptor.

The protein belongs to the DeoC/FbaB aldolase family. DeoC type 1 subfamily.

It is found in the cytoplasm. It catalyses the reaction 2-deoxy-D-ribose 5-phosphate = D-glyceraldehyde 3-phosphate + acetaldehyde. It functions in the pathway carbohydrate degradation; 2-deoxy-D-ribose 1-phosphate degradation; D-glyceraldehyde 3-phosphate and acetaldehyde from 2-deoxy-alpha-D-ribose 1-phosphate: step 2/2. In terms of biological role, catalyzes a reversible aldol reaction between acetaldehyde and D-glyceraldehyde 3-phosphate to generate 2-deoxy-D-ribose 5-phosphate. In Corynebacterium glutamicum (strain ATCC 13032 / DSM 20300 / JCM 1318 / BCRC 11384 / CCUG 27702 / LMG 3730 / NBRC 12168 / NCIMB 10025 / NRRL B-2784 / 534), this protein is Deoxyribose-phosphate aldolase.